The chain runs to 165 residues: Lipoprotein signal peptidase (165 aa).

4 consecutive transmembrane segments (helical) span residues 7–27 (YFSS…LVLL), 46–66 (AVTS…FSFL), 72–92 (WQRY…IYLL), and 100–120 (LFCW…IDRV). Catalysis depends on residues aspartate 127 and aspartate 145. A helical membrane pass occupies residues 136–156 (WHWPAFNIADSAICIGAVLFI).

Belongs to the peptidase A8 family.

The protein localises to the cell inner membrane. It carries out the reaction Release of signal peptides from bacterial membrane prolipoproteins. Hydrolyzes -Xaa-Yaa-Zaa-|-(S,diacylglyceryl)Cys-, in which Xaa is hydrophobic (preferably Leu), and Yaa (Ala or Ser) and Zaa (Gly or Ala) have small, neutral side chains.. Its pathway is protein modification; lipoprotein biosynthesis (signal peptide cleavage). Functionally, this protein specifically catalyzes the removal of signal peptides from prolipoproteins. The polypeptide is Lipoprotein signal peptidase (Janthinobacterium sp. (strain Marseille) (Minibacterium massiliensis)).